The sequence spans 190 residues: uncharacterized protein (190 aa).

This is an uncharacterized protein from Acanthamoeba polyphaga mimivirus (APMV).